The chain runs to 233 residues: MYSIKMRASKNGKHISGAERIVNKDEIEDVARELIKRALTHENGTPDFINIKIEEIKEDIEYIDHLPIKTIHCKNKEEAREKAREILRNEGIPDKVIDYAYEIIDKGGMRGAAILNLKGERLEPDKERGVRVKNIDTTKELKEKILKEKLGTERTVDAIAIASKVIHLGVIAELCTSDNKSYTTGYVATKRGYFRITNLKKEGESGGRVFFVKNDVNIEDLIDKLENKPFIIK.

It belongs to the BioW family. Homodimer. Requires Mg(2+) as cofactor.

The enzyme catalyses heptanedioate + ATP + CoA = 6-carboxyhexanoyl-CoA + AMP + diphosphate. It participates in metabolic intermediate metabolism; pimeloyl-CoA biosynthesis; pimeloyl-CoA from pimelate: step 1/1. Its function is as follows. Catalyzes the transformation of pimelate into pimeloyl-CoA with concomitant hydrolysis of ATP to AMP. This is 6-carboxyhexanoate--CoA ligase from Methanocaldococcus sp. (strain FS406-22).